The primary structure comprises 124 residues: Small ribosomal subunit protein uS12 (124 aa).

Asp89 is modified (3-methylthioaspartic acid). Residues 103-124 are disordered; sequence DTAGVQKRRQGRSKYGAKRPKS. A compositionally biased stretch (basic residues) spans 108-124; sequence QKRRQGRSKYGAKRPKS.

This sequence belongs to the universal ribosomal protein uS12 family. As to quaternary structure, part of the 30S ribosomal subunit. Contacts proteins S8 and S17. May interact with IF1 in the 30S initiation complex.

In terms of biological role, with S4 and S5 plays an important role in translational accuracy. Interacts with and stabilizes bases of the 16S rRNA that are involved in tRNA selection in the A site and with the mRNA backbone. Located at the interface of the 30S and 50S subunits, it traverses the body of the 30S subunit contacting proteins on the other side and probably holding the rRNA structure together. The combined cluster of proteins S8, S12 and S17 appears to hold together the shoulder and platform of the 30S subunit. In Methylococcus capsulatus (strain ATCC 33009 / NCIMB 11132 / Bath), this protein is Small ribosomal subunit protein uS12.